Consider the following 372-residue polypeptide: Uroporphyrinogen decarboxylase (372 aa).

Substrate contacts are provided by residues Arg35–Arg39, Asp85, Tyr166, Ser221, and His342.

It belongs to the uroporphyrinogen decarboxylase family. In terms of assembly, homodimer.

It localises to the cytoplasm. The enzyme catalyses uroporphyrinogen III + 4 H(+) = coproporphyrinogen III + 4 CO2. The protein operates within porphyrin-containing compound metabolism; protoporphyrin-IX biosynthesis; coproporphyrinogen-III from 5-aminolevulinate: step 4/4. In terms of biological role, catalyzes the decarboxylation of four acetate groups of uroporphyrinogen-III to yield coproporphyrinogen-III. In Methylibium petroleiphilum (strain ATCC BAA-1232 / LMG 22953 / PM1), this protein is Uroporphyrinogen decarboxylase.